A 279-amino-acid chain; its full sequence is Dermonecrotic toxin StSicTox-betaIB1i (279 aa).

His12 is an active-site residue. Mg(2+) is bound by residues Glu32 and Asp34. The active-site Nucleophile is the His48. 2 cysteine pairs are disulfide-bonded: Cys52-Cys58 and Cys54-Cys198. Asp92 serves as a coordination point for Mg(2+).

This sequence belongs to the arthropod phospholipase D family. Class II subfamily. Class IIb sub-subfamily. The cofactor is Mg(2+). In terms of tissue distribution, expressed by the venom gland.

The protein localises to the secreted. The enzyme catalyses an N-(acyl)-sphingosylphosphocholine = an N-(acyl)-sphingosyl-1,3-cyclic phosphate + choline. It carries out the reaction N-hexanoyl-sphing-4-enine-1-phosphocholine = N-(hexanoyl)-sphing-4-enine-1,3-cyclic phosphate + choline. The catalysed reaction is an N-(acyl)-sphingosylphosphoethanolamine = an N-(acyl)-sphingosyl-1,3-cyclic phosphate + ethanolamine. It catalyses the reaction N-dodecanoyl-heptadecasphing-4-enine-1-phosphoethanolamine = N-dodecanoyl-heptadecasphing-4-enine-1,3-cyclic phosphate + ethanolamine. The enzyme catalyses a 1-acyl-sn-glycero-3-phosphoethanolamine = a 1-acyl-sn-glycero-2,3-cyclic phosphate + ethanolamine. It carries out the reaction 1-tetradecanoyl-sn-glycero-3-phosphoethanolamine = 1-tetradecanoyl-sn-glycero-2,3-cyclic phosphate + ethanolamine. Its function is as follows. Dermonecrotic toxins cleave the phosphodiester linkage between the phosphate and headgroup of certain phospholipids (sphingolipid and lysolipid substrates), forming an alcohol (often choline) and a cyclic phosphate. This toxin acts on lysophosphatidylethanolamine (LPE) and ceramide phosphoethanolamine (CPE) with high activity. This toxin acts on sphingomyelin (SM) with very low activity and is not active on lysophosphatidylserine (LPS), lysophosphatidylcholine (LPC) and lysophosphatidylglycerol (LPG). It acts by transphosphatidylation, releasing exclusively cyclic phosphate as second products. It is not surprising that spider toxins have affinity for ethanolamine-containing sphingolipids since they are common in insect prey. Induces dermonecrosis, hemolysis, increased vascular permeability, edema, inflammatory response, and platelet aggregation. The chain is Dermonecrotic toxin StSicTox-betaIB1i from Sicarius terrosus (Cave spider).